We begin with the raw amino-acid sequence, 463 residues long: Siroheme synthase (463 aa).

The precorrin-2 dehydrogenase /sirohydrochlorin ferrochelatase stretch occupies residues 1–203 (MDYLPLFHKL…GQGAEAERLL (203 aa)). NAD(+) is bound by residues 22–23 (EI) and 43–44 (PE). Residue Ser128 is modified to Phosphoserine. The interval 216-463 (GEVYLVGAGP…LAWFEGAQNS (248 aa)) is uroporphyrinogen-III C-methyltransferase. Pro225 is an S-adenosyl-L-methionine binding site. Catalysis depends on Asp248, which acts as the Proton acceptor. The Proton donor role is filled by Lys270. Residues 301-303 (GGD), Ile306, 331-332 (TA), Met383, and Gly412 each bind S-adenosyl-L-methionine.

It in the N-terminal section; belongs to the precorrin-2 dehydrogenase / sirohydrochlorin ferrochelatase family. This sequence in the C-terminal section; belongs to the precorrin methyltransferase family.

It catalyses the reaction uroporphyrinogen III + 2 S-adenosyl-L-methionine = precorrin-2 + 2 S-adenosyl-L-homocysteine + H(+). The enzyme catalyses precorrin-2 + NAD(+) = sirohydrochlorin + NADH + 2 H(+). It carries out the reaction siroheme + 2 H(+) = sirohydrochlorin + Fe(2+). It functions in the pathway cofactor biosynthesis; adenosylcobalamin biosynthesis; precorrin-2 from uroporphyrinogen III: step 1/1. Its pathway is cofactor biosynthesis; adenosylcobalamin biosynthesis; sirohydrochlorin from precorrin-2: step 1/1. It participates in porphyrin-containing compound metabolism; siroheme biosynthesis; precorrin-2 from uroporphyrinogen III: step 1/1. The protein operates within porphyrin-containing compound metabolism; siroheme biosynthesis; siroheme from sirohydrochlorin: step 1/1. It functions in the pathway porphyrin-containing compound metabolism; siroheme biosynthesis; sirohydrochlorin from precorrin-2: step 1/1. Functionally, multifunctional enzyme that catalyzes the SAM-dependent methylations of uroporphyrinogen III at position C-2 and C-7 to form precorrin-2 via precorrin-1. Then it catalyzes the NAD-dependent ring dehydrogenation of precorrin-2 to yield sirohydrochlorin. Finally, it catalyzes the ferrochelation of sirohydrochlorin to yield siroheme. This is Siroheme synthase from Pseudomonas entomophila (strain L48).